The chain runs to 148 residues: Large ribosomal subunit protein bL9 (148 aa).

This sequence belongs to the bacterial ribosomal protein bL9 family.

Binds to the 23S rRNA. In Pseudomonas fluorescens (strain ATCC BAA-477 / NRRL B-23932 / Pf-5), this protein is Large ribosomal subunit protein bL9.